The primary structure comprises 112 residues: T cell receptor alpha variable 34 (112 aa).

Residues 1–21 form the signal peptide; it reads METVLQVLLGILGFQAAWVSS. One can recognise an Ig-like domain in the interval 22-112; that stretch reads QELEQSPQSL…HAGIYLCGAD (91 aa). Asn-38 and Asn-42 each carry an N-linked (GlcNAc...) asparagine glycan. Cys-43 and Cys-109 are joined by a disulfide.

Alpha-beta TR is a heterodimer composed of an alpha and beta chain; disulfide-linked. The alpha-beta TR is associated with the transmembrane signaling CD3 coreceptor proteins to form the TR-CD3 (TcR or TCR). The assembly of alpha-beta TR heterodimers with CD3 occurs in the endoplasmic reticulum where a single alpha-beta TR heterodimer associates with one CD3D-CD3E heterodimer, one CD3G-CD3E heterodimer and one CD247 homodimer forming a stable octameric structure. CD3D-CD3E and CD3G-CD3E heterodimers preferentially associate with TR alpha and TR beta chains, respectively. The association of the CD247 homodimer is the last step of TcR assembly in the endoplasmic reticulum and is required for transport to the cell surface.

Its subcellular location is the cell membrane. Functionally, v region of the variable domain of T cell receptor (TR) alpha chain that participates in the antigen recognition. Alpha-beta T cell receptors are antigen specific receptors which are essential to the immune response and are present on the cell surface of T lymphocytes. Recognize peptide-major histocompatibility (MH) (pMH) complexes that are displayed by antigen presenting cells (APC), a prerequisite for efficient T cell adaptive immunity against pathogens. Binding of alpha-beta TR to pMH complex initiates TR-CD3 clustering on the cell surface and intracellular activation of LCK that phosphorylates the ITAM motifs of CD3G, CD3D, CD3E and CD247 enabling the recruitment of ZAP70. In turn ZAP70 phosphorylates LAT, which recruits numerous signaling molecules to form the LAT signalosome. The LAT signalosome propagates signal branching to three major signaling pathways, the calcium, the mitogen-activated protein kinase (MAPK) kinase and the nuclear factor NF-kappa-B (NF-kB) pathways, leading to the mobilization of transcription factors that are critical for gene expression and essential for T cell growth and differentiation. The T cell repertoire is generated in the thymus, by V-(D)-J rearrangement. This repertoire is then shaped by intrathymic selection events to generate a peripheral T cell pool of self-MH restricted, non-autoaggressive T cells. Post-thymic interaction of alpha-beta TR with the pMH complexes shapes TR structural and functional avidity. This Homo sapiens (Human) protein is T cell receptor alpha variable 34.